The chain runs to 643 residues: Phosphomethylpyrimidine synthase (643 aa).

Substrate contacts are provided by residues N248, M277, Y306, H342, S362–G364, D403–R406, and E442. H446 lines the Zn(2+) pocket. Y469 provides a ligand contact to substrate. H510 serves as a coordination point for Zn(2+). Positions 590, 593, and 598 each coordinate [4Fe-4S] cluster.

Belongs to the ThiC family. As to quaternary structure, homodimer. It depends on [4Fe-4S] cluster as a cofactor.

The enzyme catalyses 5-amino-1-(5-phospho-beta-D-ribosyl)imidazole + S-adenosyl-L-methionine = 4-amino-2-methyl-5-(phosphooxymethyl)pyrimidine + CO + 5'-deoxyadenosine + formate + L-methionine + 3 H(+). It functions in the pathway cofactor biosynthesis; thiamine diphosphate biosynthesis. Its function is as follows. Catalyzes the synthesis of the hydroxymethylpyrimidine phosphate (HMP-P) moiety of thiamine from aminoimidazole ribotide (AIR) in a radical S-adenosyl-L-methionine (SAM)-dependent reaction. The sequence is that of Phosphomethylpyrimidine synthase from Paraburkholderia xenovorans (strain LB400).